The following is a 361-amino-acid chain: Dual specificity mitogen-activated protein kinase kinase 6 (361 aa).

Composition is skewed to basic and acidic residues over residues 1–11 (MEGGSDKESKV) and 37–48 (PKELKLPKEVFE). Residues 1–61 (MEGGSDKESK…PAPTPPRDLD (61 aa)) form a disordered region. Residues 30-46 (VRGKKKLPKELKLPKEV) form a d domain region. Positions 80–341 (LEQIGELGRG…YTELMQHPFF (262 aa)) constitute a Protein kinase domain. Residues 86-94 (LGRGAYGVV) and lysine 109 each bind ATP. Catalysis depends on aspartate 206, which acts as the Proton acceptor. The residue at position 234 (serine 234) is a Phosphoserine; by MAPK3. Residue threonine 238 is modified to Phosphothreonine; by MAPK3. The segment at 338 to 361 (HPFFTLHDSKDTDVASFVKTILGD) is DVD domain.

This sequence belongs to the protein kinase superfamily. STE Ser/Thr protein kinase family. MAP kinase kinase subfamily. In terms of assembly, dimer. Interacts (via its D domain) with its MAP kinase substrates. Interacts (via its DVD domain) with MAP3Ks activators. Post-translationally, weakly autophosphorylated. Phosphorylated at Ser-234 and Thr-238 by the majority of M3Ks.

It localises to the nucleus. It is found in the cytoplasm. The protein localises to the cytoskeleton. It catalyses the reaction L-seryl-[protein] + ATP = O-phospho-L-seryl-[protein] + ADP + H(+). It carries out the reaction L-threonyl-[protein] + ATP = O-phospho-L-threonyl-[protein] + ADP + H(+). The enzyme catalyses L-tyrosyl-[protein] + ATP = O-phospho-L-tyrosyl-[protein] + ADP + H(+). With respect to regulation, activated by dual phosphorylation on Ser-234 and Thr-238 in response to a variety of cellular stresses, including UV radiation, osmotic shock, hypoxia, inflammatory cytokines, interferon gamma (IFNG), and less often by growth factors. MAP2K6/MKK6 is activated by the majority of M3Ks. Functionally, dual specificity protein kinase which acts as an essential component of the MAP kinase signal transduction pathway. Catalyzes the concomitant phosphorylation of a threonine and a tyrosine residue in the MAP kinases p38 and plays an important role in the regulation of cellular responses to cytokines and all kinds of stresses. The p38 MAP kinase signal transduction pathway leads to direct activation of transcription factors. Phosphorylation by MAP2K6 asymmetrically activates p38 on one side of the blastodisc, an event which is necessary for blastomere cleavage. This chain is Dual specificity mitogen-activated protein kinase kinase 6, found in Danio rerio (Zebrafish).